Consider the following 102-residue polypeptide: Protein translation factor SUI1 homolog (102 aa).

It belongs to the SUI1 family.

The protein is Protein translation factor SUI1 homolog of Methanococcus maripaludis (strain C5 / ATCC BAA-1333).